Consider the following 102-residue polypeptide: Glutaredoxin 1 (102 aa).

The region spanning 1-96 (MNKAILHTII…KLLEGQPKKK (96 aa)) is the Glutaredoxin domain. Cys-17 and Cys-20 are disulfide-bonded.

This sequence belongs to the glutaredoxin family. As to quaternary structure, monomer.

The protein localises to the cytoplasm. Has a glutathione-disulfide oxidoreductase activity in the presence of NADPH and glutathione reductase. Reduces low molecular weight disulfides and proteins. This Rickettsia felis (strain ATCC VR-1525 / URRWXCal2) (Rickettsia azadi) protein is Glutaredoxin 1 (grxC1).